The sequence spans 395 residues: Acetate kinase (395 aa).

N8 is a Mg(2+) binding site. K15 contacts ATP. Residue R94 coordinates substrate. The Proton donor/acceptor role is filled by D151. ATP-binding positions include 210-214 (HLGNG), 284-286 (DMR), and 329-333 (GIGEN). E382 serves as a coordination point for Mg(2+).

It belongs to the acetokinase family. As to quaternary structure, homodimer. Requires Mg(2+) as cofactor. The cofactor is Mn(2+).

It localises to the cytoplasm. It carries out the reaction acetate + ATP = acetyl phosphate + ADP. It functions in the pathway metabolic intermediate biosynthesis; acetyl-CoA biosynthesis; acetyl-CoA from acetate: step 1/2. Catalyzes the formation of acetyl phosphate from acetate and ATP. Can also catalyze the reverse reaction. This Protochlamydia amoebophila (strain UWE25) protein is Acetate kinase.